Reading from the N-terminus, the 266-residue chain is Type II iodothyronine deiodinase (266 aa).

The Lumenal portion of the chain corresponds to methionine 1–leucine 9. The chain crosses the membrane as a helical; Signal-anchor for type III membrane protein span at residues isoleucine 10–leucine 34. Residues lysine 35–aspartate 266 are Cytoplasmic-facing. Residue selenocysteine 130 is part of the active site. Residues selenocysteine 130 and selenocysteine 263 are each a non-standard amino acid (selenocysteine).

This sequence belongs to the iodothyronine deiodinase family. As to quaternary structure, predominantly monomer. Can form homodimers but homodimerization is not essential for enzyme activity. Interacts with USP20 and USP33. Interacts with MARCHF6. Post-translationally, ubiquitinated by MARCHF6, leading to its degradation by the proteasome. Deubiquitinated by USP20 and USP33. As to expression, expressed in mammary gland and in brain.

The protein localises to the endoplasmic reticulum membrane. It carries out the reaction 3,3',5-triiodo-L-thyronine + iodide + A + H(+) = L-thyroxine + AH2. The enzyme catalyses 3,3'-diiodo-L-thyronine + iodide + A + H(+) = 3,3',5'-triiodo-L-thyronine + AH2. The catalysed reaction is 3'-iodo-L-thyronine + iodide + A + H(+) = 3',5'-diiodo-L-thyronine + AH2. It catalyses the reaction 3,3'-diiodothyronamine + iodide + A + H(+) = 3,3',5'-triiodothyronamine + AH2. It carries out the reaction 3'-iodothyronamine + iodide + A + H(+) = 3',5'-diiodothyronamine + AH2. In terms of biological role, plays a crucial role in the metabolism of thyroid hormones (TH) and has specific roles in TH activation and inactivation by deiodination. Catalyzes the deiodination of L-thyroxine (T4) to 3,5,3'-triiodothyronine (T3) and 3,3',5'-triiodothyronine (rT3) to 3,3'-diiodothyronine (3,3'-T2) via outer-ring deiodination (ORD). Catalyzes the deiodination of 3',5'-diiodothyronine (3',5'-T2) to 3'-monoiodothyronine (3'-T1) via ORD. Catalyzes the phenolic ring deiodinations of 3,3',5'-triiodothyronamine and 3',5'- diiodothyronamine. The sequence is that of Type II iodothyronine deiodinase (Dio2) from Mus musculus (Mouse).